We begin with the raw amino-acid sequence, 177 residues long: ADP-ribosylation factor-like protein 17 (177 aa).

Residue Gly2 is the site of N-myristoyl glycine attachment. Residues 24–31, 67–71, and 125–128 each bind GTP; these read SLDTAGKT, DVGSH, and LPHS.

Belongs to the small GTPase superfamily. Arf family.

The protein resides in the golgi apparatus. GTP-binding protein that functions as an allosteric activator of the cholera toxin catalytic subunit, an ADP-ribosyltransferase. Involved in protein trafficking; may modulate vesicle budding and uncoating within the Golgi apparatus. The protein is ADP-ribosylation factor-like protein 17 (ARL17A) of Homo sapiens (Human).